A 118-amino-acid polypeptide reads, in one-letter code: NADH-quinone oxidoreductase subunit A (118 aa).

3 helical membrane passes run 6 to 26, 64 to 84, and 87 to 107; these read LPVL…LLMG, AILF…AVVF, and IGMT…VGFI.

The protein belongs to the complex I subunit 3 family. NDH-1 is composed of 14 different subunits. Subunits NuoA, H, J, K, L, M, N constitute the membrane sector of the complex.

The protein localises to the cell inner membrane. It catalyses the reaction a quinone + NADH + 5 H(+)(in) = a quinol + NAD(+) + 4 H(+)(out). NDH-1 shuttles electrons from NADH, via FMN and iron-sulfur (Fe-S) centers, to quinones in the respiratory chain. The immediate electron acceptor for the enzyme in this species is believed to be ubiquinone. Couples the redox reaction to proton translocation (for every two electrons transferred, four hydrogen ions are translocated across the cytoplasmic membrane), and thus conserves the redox energy in a proton gradient. This chain is NADH-quinone oxidoreductase subunit A, found in Acidithiobacillus ferrooxidans (strain ATCC 53993 / BNL-5-31) (Leptospirillum ferrooxidans (ATCC 53993)).